Here is a 375-residue protein sequence, read N- to C-terminus: Probable aspartate aminotransferase (375 aa).

L-aspartate contacts are provided by Gly-31 and Asn-165. Residue Lys-223 is modified to N6-(pyridoxal phosphate)lysine. Arg-353 contacts L-aspartate.

This sequence belongs to the class-I pyridoxal-phosphate-dependent aminotransferase family. In terms of assembly, homodimer. The cofactor is pyridoxal 5'-phosphate.

It is found in the cytoplasm. The enzyme catalyses L-aspartate + 2-oxoglutarate = oxaloacetate + L-glutamate. The chain is Probable aspartate aminotransferase from Methanocaldococcus jannaschii (strain ATCC 43067 / DSM 2661 / JAL-1 / JCM 10045 / NBRC 100440) (Methanococcus jannaschii).